The sequence spans 116 residues: Putative UPF0320 protein YLL065W (116 aa).

The protein belongs to the UPF0320 family.

The polypeptide is Putative UPF0320 protein YLL065W (Saccharomyces cerevisiae (strain ATCC 204508 / S288c) (Baker's yeast)).